A 555-amino-acid polypeptide reads, in one-letter code: Urocanate hydratase (555 aa).

Residues 51–52, Gln129, 175–177, Glu195, 262–266, 272–273, and Tyr321 contribute to the NAD(+) site; these read GG, GMG, QTSAH, and YL. Cys409 is a catalytic residue. An NAD(+)-binding site is contributed by Gly491.

Belongs to the urocanase family. Requires NAD(+) as cofactor.

The protein resides in the cytoplasm. It carries out the reaction 4-imidazolone-5-propanoate = trans-urocanate + H2O. Its pathway is amino-acid degradation; L-histidine degradation into L-glutamate; N-formimidoyl-L-glutamate from L-histidine: step 2/3. Catalyzes the conversion of urocanate to 4-imidazolone-5-propionate. The polypeptide is Urocanate hydratase (Xanthomonas campestris pv. campestris (strain ATCC 33913 / DSM 3586 / NCPPB 528 / LMG 568 / P 25)).